Here is a 304-residue protein sequence, read N- to C-terminus: GTP cyclohydrolase FolE2 (304 aa).

It belongs to the GTP cyclohydrolase IV family.

It carries out the reaction GTP + H2O = 7,8-dihydroneopterin 3'-triphosphate + formate + H(+). It participates in cofactor biosynthesis; 7,8-dihydroneopterin triphosphate biosynthesis; 7,8-dihydroneopterin triphosphate from GTP: step 1/1. Converts GTP to 7,8-dihydroneopterin triphosphate. This chain is GTP cyclohydrolase FolE2, found in Hahella chejuensis (strain KCTC 2396).